The primary structure comprises 264 residues: Phosphatidylglycerol--prolipoprotein diacylglyceryl transferase (264 aa).

3 helical membrane-spanning segments follow: residues 17–37 (LAIH…LWLA), 59–79 (LLFY…VLFY), and 95–115 (WKGG…MALF). An a 1,2-diacyl-sn-glycero-3-phospho-(1'-sn-glycerol)-binding site is contributed by Arg-142. Transmembrane regions (helical) follow at residues 205–225 (GQVS…AEYF) and 241–261 (MGQW…VWAG).

It belongs to the Lgt family.

The protein localises to the cell inner membrane. The enzyme catalyses L-cysteinyl-[prolipoprotein] + a 1,2-diacyl-sn-glycero-3-phospho-(1'-sn-glycerol) = an S-1,2-diacyl-sn-glyceryl-L-cysteinyl-[prolipoprotein] + sn-glycerol 1-phosphate + H(+). Its pathway is protein modification; lipoprotein biosynthesis (diacylglyceryl transfer). Its function is as follows. Catalyzes the transfer of the diacylglyceryl group from phosphatidylglycerol to the sulfhydryl group of the N-terminal cysteine of a prolipoprotein, the first step in the formation of mature lipoproteins. In Methylibium petroleiphilum (strain ATCC BAA-1232 / LMG 22953 / PM1), this protein is Phosphatidylglycerol--prolipoprotein diacylglyceryl transferase.